A 215-amino-acid chain; its full sequence is dITP/XTP pyrophosphatase (215 aa).

13–18 (THNTGK) is a substrate binding site. Catalysis depends on Asp-74, which acts as the Proton acceptor. Asp-74 lines the Mg(2+) pocket. Substrate contacts are provided by residues Ser-75, 163-166 (FGFD), Lys-186, and 199-200 (HR).

Belongs to the HAM1 NTPase family. In terms of assembly, homodimer. Mg(2+) serves as cofactor.

It catalyses the reaction XTP + H2O = XMP + diphosphate + H(+). The catalysed reaction is dITP + H2O = dIMP + diphosphate + H(+). It carries out the reaction ITP + H2O = IMP + diphosphate + H(+). In terms of biological role, pyrophosphatase that catalyzes the hydrolysis of nucleoside triphosphates to their monophosphate derivatives, with a high preference for the non-canonical purine nucleotides XTP (xanthosine triphosphate), dITP (deoxyinosine triphosphate) and ITP. Seems to function as a house-cleaning enzyme that removes non-canonical purine nucleotides from the nucleotide pool, thus preventing their incorporation into DNA/RNA and avoiding chromosomal lesions. The chain is dITP/XTP pyrophosphatase from Bartonella quintana (strain Toulouse) (Rochalimaea quintana).